Reading from the N-terminus, the 582-residue chain is Threonine--tRNA ligase (582 aa).

The tract at residues 185 to 478 is catalytic; the sequence is DHRKLGKELE…LTEQYGGAFP (294 aa). The Zn(2+) site is built by Cys278, His329, and His455.

The protein belongs to the class-II aminoacyl-tRNA synthetase family. Homodimer. Zn(2+) serves as cofactor.

It is found in the cytoplasm. The catalysed reaction is tRNA(Thr) + L-threonine + ATP = L-threonyl-tRNA(Thr) + AMP + diphosphate + H(+). Catalyzes the attachment of threonine to tRNA(Thr) in a two-step reaction: L-threonine is first activated by ATP to form Thr-AMP and then transferred to the acceptor end of tRNA(Thr). Also edits incorrectly charged L-seryl-tRNA(Thr). This Dehalococcoides mccartyi (strain CBDB1) protein is Threonine--tRNA ligase.